We begin with the raw amino-acid sequence, 371 residues long: Glutamate 5-kinase (371 aa).

Lys-10 is a binding site for ATP. Substrate contacts are provided by Ser-50, Asp-137, and Asn-149. Residues 169 to 170 (SD) and 208 to 214 (TGGMFTK) contribute to the ATP site. The PUA domain maps to 274 to 352 (EGRIYIDDGA…EEIRNILGED (79 aa)).

This sequence belongs to the glutamate 5-kinase family.

The protein localises to the cytoplasm. The enzyme catalyses L-glutamate + ATP = L-glutamyl 5-phosphate + ADP. The protein operates within amino-acid biosynthesis; L-proline biosynthesis; L-glutamate 5-semialdehyde from L-glutamate: step 1/2. In terms of biological role, catalyzes the transfer of a phosphate group to glutamate to form L-glutamate 5-phosphate. This Dictyoglomus turgidum (strain DSM 6724 / Z-1310) protein is Glutamate 5-kinase.